Consider the following 846-residue polypeptide: Selenocysteine insertion sequence-binding protein 2 (846 aa).

Composition is skewed to basic and acidic residues over residues 151–165 (RRAW…RRAD) and 206–215 (PEFEFSRLDF). Disordered regions lie at residues 151-246 (RRAW…SNMS), 266-288 (TDHT…TREL), 321-440 (TTSS…VPVQ), 448-467 (AALE…RPVV), and 475-613 (VLSK…DSAT). Position 220 is a phosphoserine (serine 220). 3 stretches are compositionally biased toward polar residues: residues 220-232 (SPKN…TQKQ), 272-288 (AVTN…TREL), and 321-342 (TTSS…SDPS). Positions 370-380 (KKNKKKKEKSK) match the Nuclear localization signal motif. The span at 417 to 428 (KLQSKQQAQNDF) shows a compositional bias: polar residues. The span at 527–536 (ILKERQERMQ) shows a compositional bias: basic and acidic residues. Positions 542 to 551 (SAVSPTVASD) are enriched in polar residues. Residues 666–687 (LVLGLREVLKHLKLRKLKCIII) are RNA-binding. The disordered stretch occupies residues 774–804 (RQEQAGEPGPQTPPSPPMQDPIQSTDEGTLA). The span at 783-792 (PQTPPSPPMQ) shows a compositional bias: pro residues.

Ubiquitous.

The protein localises to the cytoplasm. Its subcellular location is the nucleus. Its function is as follows. mRNA-binding protein that binds to the SECIS (selenocysteine insertion sequence) element present in the 3'-UTR of mRNAs encoding selenoproteins and facilitates the incorporation of the rare amino acid selenocysteine. Insertion of selenocysteine at UGA codons is mediated by SECISBP2 and EEFSEC: SECISBP2 (1) specifically binds the SECIS sequence once the 80S ribosome encounters an in-frame UGA codon and (2) contacts the RPS27A/eS31 of the 40S ribosome before ribosome stalling. (3) GTP-bound EEFSEC then delivers selenocysteinyl-tRNA(Sec) to the 80S ribosome and adopts a preaccommodated state conformation. (4) After GTP hydrolysis, EEFSEC dissociates from the assembly, selenocysteinyl-tRNA(Sec) accommodates, and peptide bond synthesis and selenoprotein elongation occur. The protein is Selenocysteine insertion sequence-binding protein 2 (Secisbp2) of Rattus norvegicus (Rat).